The following is a 287-amino-acid chain: MVLIIDRLYEEVNKKGNVCVGLDTDLSYIPQRFLKNYENIEDAIFQFNRKIIDATHDAVACYKVQIAYYESFGLKGLMAYKRTLEYIKKVGCIAISDVKRGDISKTAEMYAKAHFEGDFETDFITVNPYMGMDSIEPYMPYLQNKEKGLFALVRTSNPGSKDFEYIQSGSGRRVYEIVGEKLERLGEKVMGQCGYSSIGGVVGCTTLEDGKEIRKNFGKTFFLIPGFGAQGGGAKEANVYLKDGNGGVVNSSRGILLAYKKYENGEKNFDECSRKEVLKMQKELGRE.

Residue Lys-99 is the Proton donor of the active site.

This sequence belongs to the OMP decarboxylase family. Type 2 subfamily.

The catalysed reaction is orotidine 5'-phosphate + H(+) = UMP + CO2. It functions in the pathway pyrimidine metabolism; UMP biosynthesis via de novo pathway; UMP from orotate: step 2/2. This Clostridium novyi (strain NT) protein is Orotidine 5'-phosphate decarboxylase.